Reading from the N-terminus, the 135-residue chain is Probable histone H2A.1 (135 aa).

Belongs to the histone H2A family. In terms of assembly, the nucleosome is a histone octamer containing two molecules each of H2A, H2B, H3 and H4 assembled in one H3-H4 heterotetramer and two H2A-H2B heterodimers. The octamer wraps approximately 147 bp of DNA.

It localises to the nucleus. The protein resides in the chromosome. Its function is as follows. Core component of nucleosome. Nucleosomes wrap and compact DNA into chromatin, limiting DNA accessibility to the cellular machineries which require DNA as a template. Histones thereby play a central role in transcription regulation, DNA repair, DNA replication and chromosomal stability. DNA accessibility is regulated via a complex set of post-translational modifications of histones, also called histone code, and nucleosome remodeling. This chain is Probable histone H2A.1, found in Oryza sativa subsp. japonica (Rice).